Reading from the N-terminus, the 446-residue chain is Probable glucuronosyltransferase Os04g0650300 (446 aa).

The Cytoplasmic segment spans residues 1–30; sequence MKLPLLRPLWPMLSPAAGSPDSPPEPSKPS. The helical; Signal-anchor for type II membrane protein transmembrane segment at 31 to 51 threads the bilayer; that stretch reads LPAAWLLLHALFCATSMAVGF. The Lumenal portion of the chain corresponds to 52–446; the sequence is RFSRLIVYLL…TTLLNTEGQH (395 aa). Residue N87 is glycosylated (N-linked (GlcNAc...) asparagine). The tract at residues 425 to 446 is disordered; sequence QQDAKPETPLKRTTLLNTEGQH.

It belongs to the glycosyltransferase 43 family.

Its subcellular location is the golgi apparatus membrane. In terms of biological role, involved in the synthesis of glucuronoxylan hemicellulose in secondary cell walls. This chain is Probable glucuronosyltransferase Os04g0650300, found in Oryza sativa subsp. japonica (Rice).